A 411-amino-acid chain; its full sequence is Chorismate synthase (411 aa).

Residues Arg-40 and Arg-46 each coordinate NADP(+). Residues 135–137 (RAS) and 256–257 (QA) contribute to the FMN site. Residues 278 to 299 (HDGIARGADGRPRRTSDRAGGI) are disordered. The segment covering 285–294 (ADGRPRRTSD) has biased composition (basic and acidic residues). FMN contacts are provided by residues Ala-301, 316 to 320 (KPIAT), and Arg-342.

This sequence belongs to the chorismate synthase family. Homotetramer. FMNH2 serves as cofactor.

The enzyme catalyses 5-O-(1-carboxyvinyl)-3-phosphoshikimate = chorismate + phosphate. It participates in metabolic intermediate biosynthesis; chorismate biosynthesis; chorismate from D-erythrose 4-phosphate and phosphoenolpyruvate: step 7/7. In terms of biological role, catalyzes the anti-1,4-elimination of the C-3 phosphate and the C-6 proR hydrogen from 5-enolpyruvylshikimate-3-phosphate (EPSP) to yield chorismate, which is the branch point compound that serves as the starting substrate for the three terminal pathways of aromatic amino acid biosynthesis. This reaction introduces a second double bond into the aromatic ring system. In Micrococcus luteus (strain ATCC 4698 / DSM 20030 / JCM 1464 / CCM 169 / CCUG 5858 / IAM 1056 / NBRC 3333 / NCIMB 9278 / NCTC 2665 / VKM Ac-2230) (Micrococcus lysodeikticus), this protein is Chorismate synthase.